The following is a 467-amino-acid chain: MTKIASIADVLQGEIAVGEKVTVRGWVRTRRDSKAGLSFLTVYDGSCFNPIQAIINNDIVNYESEVLRLTAGCSVIVTGTVVESPAQGQAVELQTETVEVVGWVEDPDTYPMAAKRHSIEYLREVAHLRPRTNIIGAVARVRHCLAQAIHRFFHEQGFYWVATPLITASDTEGAGEMFRVSTLDLENLPRTQAGTVDFNQDFFGKEAFLTVSGQLNGETYACALSKIYTFGPTFRAENSNTTRHLAEFWMVEPEIAFATLADNAKLAEDMLKYVFNAVLTERRDDLEFFSKHVDKDVITRLEHFVNSPFAQIDYTDAIDVLVKSGKKFEFPVSWGIDLSSEHERYLAEEHFKSPVVVKNYPKGIKAFYMRLNDDGKTVAAMDVLAPGIGEIIGGSQREERLDVLDKRMVEMGLKPEDYWWYRDLRKYGTVPHSGFGLGFERLIVYVTGVQNIRDVIPFPRSPRNANF.

The protein belongs to the class-II aminoacyl-tRNA synthetase family. In terms of assembly, homodimer.

Its subcellular location is the cytoplasm. It catalyses the reaction tRNA(Asn) + L-asparagine + ATP = L-asparaginyl-tRNA(Asn) + AMP + diphosphate + H(+). This Actinobacillus succinogenes (strain ATCC 55618 / DSM 22257 / CCUG 43843 / 130Z) protein is Asparagine--tRNA ligase.